Consider the following 140-residue polypeptide: MKKNGILNRELSYLIASMGHGDILSIVDSGFPISEDVFCVDLSLIAGKPKIVEIIIPLLEELEIEKVLIAEEIKMISPKYHQKLLSIFPKNVQIEYIPHEKFKDRVRESKGVVRTGEQTSYSSVILVGGVTYHGEKEEGL.

Catalysis depends on H20, which acts as the Proton donor. Residues D28, H99, and Y121–S123 contribute to the substrate site.

Belongs to the RbsD / FucU family. RbsD subfamily. In terms of assembly, homodecamer.

It localises to the cytoplasm. The catalysed reaction is beta-D-ribopyranose = beta-D-ribofuranose. Its pathway is carbohydrate metabolism; D-ribose degradation; D-ribose 5-phosphate from beta-D-ribopyranose: step 1/2. Catalyzes the interconversion of beta-pyran and beta-furan forms of D-ribose. This is D-ribose pyranase from Pseudothermotoga lettingae (strain ATCC BAA-301 / DSM 14385 / NBRC 107922 / TMO) (Thermotoga lettingae).